A 542-amino-acid chain; its full sequence is Glucose-6-phosphate isomerase (542 aa).

Residue E353 is the Proton donor of the active site. Residues H384 and K508 contribute to the active site.

The protein belongs to the GPI family.

It is found in the cytoplasm. It catalyses the reaction alpha-D-glucose 6-phosphate = beta-D-fructose 6-phosphate. Its pathway is carbohydrate biosynthesis; gluconeogenesis. The protein operates within carbohydrate degradation; glycolysis; D-glyceraldehyde 3-phosphate and glycerone phosphate from D-glucose: step 2/4. Its function is as follows. Catalyzes the reversible isomerization of glucose-6-phosphate to fructose-6-phosphate. The sequence is that of Glucose-6-phosphate isomerase from Corynebacterium efficiens (strain DSM 44549 / YS-314 / AJ 12310 / JCM 11189 / NBRC 100395).